A 466-amino-acid polypeptide reads, in one-letter code: Histidine--tRNA ligase (466 aa).

It belongs to the class-II aminoacyl-tRNA synthetase family. As to quaternary structure, homodimer.

Its subcellular location is the cytoplasm. It carries out the reaction tRNA(His) + L-histidine + ATP = L-histidyl-tRNA(His) + AMP + diphosphate + H(+). The chain is Histidine--tRNA ligase from Xylella fastidiosa (strain M23).